Reading from the N-terminus, the 170-residue chain is Crossover junction endodeoxyribonuclease RuvC (170 aa).

Residues aspartate 11, glutamate 71, and aspartate 143 contribute to the active site. Residues aspartate 11, glutamate 71, and aspartate 143 each coordinate Mg(2+).

The protein belongs to the RuvC family. Homodimer which binds Holliday junction (HJ) DNA. The HJ becomes 2-fold symmetrical on binding to RuvC with unstacked arms; it has a different conformation from HJ DNA in complex with RuvA. In the full resolvosome a probable DNA-RuvA(4)-RuvB(12)-RuvC(2) complex forms which resolves the HJ. Requires Mg(2+) as cofactor.

The protein localises to the cytoplasm. It catalyses the reaction Endonucleolytic cleavage at a junction such as a reciprocal single-stranded crossover between two homologous DNA duplexes (Holliday junction).. In terms of biological role, the RuvA-RuvB-RuvC complex processes Holliday junction (HJ) DNA during genetic recombination and DNA repair. Endonuclease that resolves HJ intermediates. Cleaves cruciform DNA by making single-stranded nicks across the HJ at symmetrical positions within the homologous arms, yielding a 5'-phosphate and a 3'-hydroxyl group; requires a central core of homology in the junction. The consensus cleavage sequence is 5'-(A/T)TT(C/G)-3'. Cleavage occurs on the 3'-side of the TT dinucleotide at the point of strand exchange. HJ branch migration catalyzed by RuvA-RuvB allows RuvC to scan DNA until it finds its consensus sequence, where it cleaves and resolves the cruciform DNA. The chain is Crossover junction endodeoxyribonuclease RuvC from Agrobacterium fabrum (strain C58 / ATCC 33970) (Agrobacterium tumefaciens (strain C58)).